A 455-amino-acid chain; its full sequence is MKPGFKDLRAVGYQTDVPYVSLSNYCWSFNCPKPGAEVEFLNMTFQLMNSTATIVQIDADIEQSIDMVSNGSADITLVSARQTLDRMKKVDFTTPIGFVYYGYLVREIPELAVADYIMRLFDYDTLAILISFGLIIGALLYLYTWIFGLRVRSLLDWMFISCSGIIHQFMFRISSPICALVLIGFWLLCCLVIITYYEAKLKSFLLLSHHRGTIFNTLDGVLEAAEHKGWTLVIQERGYTPYLYCNPSQCARLDRLKSRINFIGADDDANLLLGQDKHVGFSALASDLAETDITYFDYHSKILFVRDKIMAPEYLAYAVNKNVKGLREKFNRAVAYTKSGYGTVRSRYIASFPSYNSVTSQSQTITVLQTSHFIQLYKFCFIFYGIAIIVFILEIIFHRMTKNFTFFGHSYNYHLSGFEWRFARPKWIHFPRRNTVILPLSKSYSPDNERRVTVC.

N-linked (GlcNAc...) asparagine glycans are attached at residues Asn42, Asn49, and Asn70. 4 helical membrane passes run 127-147 (AILI…TWIF), 153-173 (SLLD…MFRI), 177-197 (ICAL…ITYY), and 377-397 (YKFC…EIIF). N-linked (GlcNAc...) asparagine glycosylation is present at Asn403.

The protein localises to the membrane. This is an uncharacterized protein from Caenorhabditis elegans.